Consider the following 445-residue polypeptide: Glutamate--tRNA ligase 2 (445 aa).

Residues 10–20 (PSPTGMLHVGN) carry the 'HIGH' region motif. Positions 240 to 244 (KISKR) match the 'KMSKS' region motif. An ATP-binding site is contributed by lysine 243.

The protein belongs to the class-I aminoacyl-tRNA synthetase family. Glutamate--tRNA ligase type 1 subfamily. In terms of assembly, monomer.

The protein localises to the cytoplasm. It carries out the reaction tRNA(Glu) + L-glutamate + ATP = L-glutamyl-tRNA(Glu) + AMP + diphosphate. Catalyzes the attachment of glutamate to tRNA(Glu) in a two-step reaction: glutamate is first activated by ATP to form Glu-AMP and then transferred to the acceptor end of tRNA(Glu). The sequence is that of Glutamate--tRNA ligase 2 from Rickettsia canadensis (strain McKiel).